An 82-amino-acid polypeptide reads, in one-letter code: UPF0180 protein BC_1394 (82 aa).

Belongs to the UPF0180 family.

In Bacillus cereus (strain ATCC 14579 / DSM 31 / CCUG 7414 / JCM 2152 / NBRC 15305 / NCIMB 9373 / NCTC 2599 / NRRL B-3711), this protein is UPF0180 protein BC_1394.